The following is a 227-amino-acid chain: Glutathione S-transferase U13 (227 aa).

One can recognise a GST N-terminal domain in the interval 5 to 86 (DTVKLIGSWS…YVDEAWPSVP (82 aa)). Residues 15 to 16 (SP), 43 to 44 (EK), 57 to 58 (KV), and 70 to 71 (ES) each bind glutathione. Residues 92–224 (DAYDRASARF…EVVAFAKQKF (133 aa)) form the GST C-terminal domain. Phosphothreonine is present on T158.

Belongs to the GST superfamily. Tau family.

The protein resides in the cytoplasm. Its subcellular location is the cytosol. It catalyses the reaction RX + glutathione = an S-substituted glutathione + a halide anion + H(+). Its function is as follows. In vitro, possesses glutathione S-transferase activity toward 1-chloro-2,4-dinitrobenzene (CDNB) and benzyl isothiocyanate (BITC). May be involved in the conjugation of reduced glutathione to a wide number of exogenous and endogenous hydrophobic electrophiles and have a detoxification role against certain herbicides. The chain is Glutathione S-transferase U13 (GSTU13) from Arabidopsis thaliana (Mouse-ear cress).